Here is a 420-residue protein sequence, read N- to C-terminus: Exodeoxyribonuclease 7 large subunit (420 aa).

The protein belongs to the XseA family. Heterooligomer composed of large and small subunits.

It is found in the cytoplasm. It catalyses the reaction Exonucleolytic cleavage in either 5'- to 3'- or 3'- to 5'-direction to yield nucleoside 5'-phosphates.. Functionally, bidirectionally degrades single-stranded DNA into large acid-insoluble oligonucleotides, which are then degraded further into small acid-soluble oligonucleotides. The sequence is that of Exodeoxyribonuclease 7 large subunit from Helicobacter pylori (strain Shi470).